A 488-amino-acid chain; its full sequence is Germacrene A hydroxylase (488 aa).

The Cytoplasmic portion of the chain corresponds to 1 to 6 (MELSFT). A helical; Signal-anchor for type II membrane protein membrane pass occupies residues 7 to 23 (TSIAVATIVFVLFKLAT). Residues 24–488 (RPKSNKKLLP…KTHLVLVPSF (465 aa)) are Lumenal-facing. N-linked (GlcNAc...) asparagine glycosylation is found at Asn255, Asn260, and Asn379. Cys432 lines the heme pocket.

The protein belongs to the cytochrome P450 family. Heme serves as cofactor.

The protein resides in the endoplasmic reticulum membrane. It carries out the reaction (+)-(R)-germacrene A + 3 reduced [NADPH--hemoprotein reductase] + 3 O2 = germacra-1(10),4,11(13)-trien-12-oate + 3 oxidized [NADPH--hemoprotein reductase] + 4 H2O + 4 H(+). It participates in secondary metabolite biosynthesis; terpenoid biosynthesis. In terms of biological role, involved in the biosynthesis of germacrene-derived sesquiterpene lactones. Catalyzes three consecutive oxidations of germacrene A to produce germacrene A acid. Could also catalyze the three-step oxidation of non-natural substrate amorphadiene to artemisinic acid. This chain is Germacrene A hydroxylase, found in Saussurea costus (Costus).